A 300-amino-acid polypeptide reads, in one-letter code: HTH-type transcriptional regulator ArgP (300 aa).

The HTH lysR-type domain maps to 4–60 (PDYRTLQALDAVIRERGFERAAQKLCITQSAVSQRIKQLENLFGQPLLVRTVPPRPT). The H-T-H motif DNA-binding region spans 21–40 (FERAAQKLCITQSAVSQRIK).

It belongs to the LysR transcriptional regulatory family. As to quaternary structure, homodimer.

Its function is as follows. Controls the transcription of genes involved in arginine and lysine metabolism. The polypeptide is HTH-type transcriptional regulator ArgP (Photorhabdus laumondii subsp. laumondii (strain DSM 15139 / CIP 105565 / TT01) (Photorhabdus luminescens subsp. laumondii)).